The chain runs to 136 residues: HetP-like commitment protein Alr2902 (136 aa).

Over residues 94-109 the composition is skewed to polar residues; that stretch reads KASTQDLNQSNNSDYL. The disordered stretch occupies residues 94 to 120; sequence KASTQDLNQSNNSDYLTTPEPDKRGNI.

This sequence belongs to the HetP family. In bacterial two-hybrid assays interacts robustly with HetR and Alr3234 and weakly with itself, HetP and Asl1930.

Its function is as follows. Delays heterocyst differentiation and commitment when nitrogen is limiting. Interplay between the 4 HetP paralogs controls the timing of commitment to heterocyst formation and its duration. Epistatic analysis show that the 3 paralogs act upstream of hetP to delay commitment (asl1930, alr3234) or inhibit development (alr2902). Asl1930 and Alr3234 must also attenuate the activity of Alr2902. When only this homolog is present no heterocysts are formed, showing it inhibits development. Ectopic expression partially complements a hetP deletion. This chain is HetP-like commitment protein Alr2902, found in Nostoc sp. (strain PCC 7120 / SAG 25.82 / UTEX 2576).